A 209-amino-acid chain; its full sequence is CASP-like protein 1B1 (209 aa).

Residues methionine 1–proline 10 are compositionally biased toward basic and acidic residues. Residues methionine 1–proline 39 form a disordered region. Over methionine 1–glutamine 49 the chain is Cytoplasmic. Over residues arginine 19 to alanine 32 the composition is skewed to low complexity. The helical transmembrane segment at proline 50–leucine 70 threads the bilayer. Over aspartate 71–alanine 100 the chain is Extracellular. The helical transmembrane segment at phenylalanine 101–valine 121 threads the bilayer. Over arginine 122–arginine 134 the chain is Cytoplasmic. Residues methionine 135–alanine 155 form a helical membrane-spanning segment. Topologically, residues glutamate 156–arginine 180 are extracellular. Residues glycine 181–leucine 201 traverse the membrane as a helical segment. The Cytoplasmic segment spans residues serine 202–cysteine 209.

Belongs to the Casparian strip membrane proteins (CASP) family. As to quaternary structure, homodimer and heterodimers.

Its subcellular location is the cell membrane. This is CASP-like protein 1B1 from Zea mays (Maize).